The primary structure comprises 383 residues: MKNVLPPFIEIYRALIATPSISATEESLDQSNASLITLLAGWFSDLGFNVEVQPVPGTRNKFNMLASTGHGAGGLLLTGHTDTVPFDDGRWTRDPFTLTEHDNKLYGLGTADMKGFFAFILDALRDVDVTKLKKPLYILATADEETSMAGARYFSETTALRPDCAIIGEPTSLQPIRAHKGHISDVVRVLGQSGHSSDPARGVNAIELMHDAIGHIMQLRDSLKARYHYEAFTVPYPTLNLGHIHGGDASNRICACCELHMDIRPLPGMTLNDLNGLLNDALAPVSERWPGRLTVAELHPPIPGYECPPDHQLVEVVEKLLGTKTDVVNYCTEAPFMQTLCPTLVLGPGSINQAHQPDEYLETRFIKPTRELITQVVHHFCWH.

Position 80 (H80) interacts with Zn(2+). The active site involves D82. Residue D112 participates in Zn(2+) binding. The active site involves E144. The Zn(2+) site is built by E145, E169, and H355.

It belongs to the peptidase M20A family. ArgE subfamily. In terms of assembly, homodimer. It depends on Zn(2+) as a cofactor. The cofactor is Co(2+). Glutathione is required as a cofactor.

It localises to the cytoplasm. The enzyme catalyses N(2)-acetyl-L-ornithine + H2O = L-ornithine + acetate. The protein operates within amino-acid biosynthesis; L-arginine biosynthesis; L-ornithine from N(2)-acetyl-L-ornithine (linear): step 1/1. Catalyzes the hydrolysis of the amide bond of N(2)-acetylated L-amino acids. Cleaves the acetyl group from N-acetyl-L-ornithine to form L-ornithine, an intermediate in L-arginine biosynthesis pathway, and a branchpoint in the synthesis of polyamines. The sequence is that of Acetylornithine deacetylase from Salmonella paratyphi A (strain ATCC 9150 / SARB42).